A 215-amino-acid polypeptide reads, in one-letter code: E3 ubiquitin-protein ligase znrf1 (215 aa).

2 disordered regions span residues 1–39 (MGGK…PGGT) and 66–96 (YTPR…ETGG). A lipid anchor (N-myristoyl glycine) is attached at Gly2. The segment at 172 to 213 (CVICLEELQQGDTIARLPCLCIYHKSCIDSWFEINRSCPEHP) adopts an RING-type; atypical zinc-finger fold.

Its subcellular location is the endosome. The protein resides in the lysosome. It is found in the membrane. The catalysed reaction is S-ubiquitinyl-[E2 ubiquitin-conjugating enzyme]-L-cysteine + [acceptor protein]-L-lysine = [E2 ubiquitin-conjugating enzyme]-L-cysteine + N(6)-ubiquitinyl-[acceptor protein]-L-lysine.. The protein operates within protein modification; protein ubiquitination. Functionally, E3 ubiquitin-protein ligase that plays a role in neuron cells differentiation. Plays a role in the establishment and maintenance of neuronal transmission and plasticity. The protein is E3 ubiquitin-protein ligase znrf1 (znrf1) of Danio rerio (Zebrafish).